A 305-amino-acid chain; its full sequence is Homoserine O-acetyltransferase (305 aa).

The active-site Acyl-thioester intermediate is the cysteine 142. The substrate site is built by lysine 163 and serine 192. Residue histidine 235 is the Proton acceptor of the active site. Glutamate 237 is a catalytic residue. Residue arginine 249 participates in substrate binding.

It belongs to the MetA family.

Its subcellular location is the cytoplasm. It catalyses the reaction L-homoserine + acetyl-CoA = O-acetyl-L-homoserine + CoA. Its pathway is amino-acid biosynthesis; L-methionine biosynthesis via de novo pathway; O-acetyl-L-homoserine from L-homoserine: step 1/1. Functionally, transfers an acetyl group from acetyl-CoA to L-homoserine, forming acetyl-L-homoserine. The sequence is that of Homoserine O-acetyltransferase from Acetivibrio thermocellus (strain ATCC 27405 / DSM 1237 / JCM 9322 / NBRC 103400 / NCIMB 10682 / NRRL B-4536 / VPI 7372) (Clostridium thermocellum).